A 289-amino-acid polypeptide reads, in one-letter code: tRNA pseudouridine synthase B (289 aa).

Asp38 functions as the Nucleophile in the catalytic mechanism.

The protein belongs to the pseudouridine synthase TruB family. Type 1 subfamily.

It carries out the reaction uridine(55) in tRNA = pseudouridine(55) in tRNA. Functionally, responsible for synthesis of pseudouridine from uracil-55 in the psi GC loop of transfer RNAs. In Clostridium novyi (strain NT), this protein is tRNA pseudouridine synthase B.